The primary structure comprises 412 residues: Methylmalonic aciduria type A homolog, mitochondrial (412 aa).

The N-terminal 15 residues, 1-15 (MVVRALVRAHPLSRI), are a transit peptide targeting the mitochondrion. GTP contacts are provided by residues 132–140 (GSPGVGKSS), Asp-275, and 311–313 (SIM).

Belongs to the SIMIBI class G3E GTPase family. ArgK/MeaB subfamily.

The protein localises to the mitochondrion. May have GTPase activity. May also bind and hydrolyze ATP. May function as chaperone. Likely to have a role in propionyl-CoA metabolism and adenosylcobalamin synthesis. The protein is Methylmalonic aciduria type A homolog, mitochondrial of Caenorhabditis briggsae.